Reading from the N-terminus, the 543-residue chain is Hydroxylamine reductase (543 aa).

Residues C5, C8, C17, and C23 each coordinate [4Fe-4S] cluster. Residues H236, E260, C304, C398, C426, C451, E486, and K488 each coordinate hybrid [4Fe-2O-2S] cluster. C398 is modified (cysteine persulfide).

Belongs to the HCP family. Requires [4Fe-4S] cluster as cofactor. Hybrid [4Fe-2O-2S] cluster serves as cofactor.

The protein localises to the cytoplasm. The catalysed reaction is A + NH4(+) + H2O = hydroxylamine + AH2 + H(+). In terms of biological role, catalyzes the reduction of hydroxylamine to form NH(3) and H(2)O. This is Hydroxylamine reductase from Bacteroides thetaiotaomicron (strain ATCC 29148 / DSM 2079 / JCM 5827 / CCUG 10774 / NCTC 10582 / VPI-5482 / E50).